Here is a 239-residue protein sequence, read N- to C-terminus: Guanylate kinase (239 aa).

In terms of domain architecture, Guanylate kinase-like spans 19-197 (GLLIVVTGAS…AVSELLAVQQ (179 aa)). ATP is bound at residue 26–33 (GASGVGKG).

Belongs to the guanylate kinase family.

Its subcellular location is the cytoplasm. It catalyses the reaction GMP + ATP = GDP + ADP. Its function is as follows. Essential for recycling GMP and indirectly, cGMP. This Deinococcus radiodurans (strain ATCC 13939 / DSM 20539 / JCM 16871 / CCUG 27074 / LMG 4051 / NBRC 15346 / NCIMB 9279 / VKM B-1422 / R1) protein is Guanylate kinase (gmk).